Reading from the N-terminus, the 736-residue chain is Myotubularin-related protein 12 (736 aa).

In terms of domain architecture, Myotubularin phosphatase spans 182-558 (YLRSTNPEML…RQLSLPSSAF (377 aa)). The interval 672–691 (SLATQPDHPPPLHHRLPSFG) is disordered.

It belongs to the protein-tyrosine phosphatase family. Non-receptor class myotubularin subfamily. In terms of assembly, heterodimer with lipid phosphatase mtm1. In skeletal muscles, the interaction stabilizes both mtmr12 and mtm1 protein levels.

The protein resides in the cytoplasm. Its subcellular location is the sarcoplasmic reticulum. It localises to the myofibril. The protein localises to the sarcomere. Functionally, acts as an adapter for the myotubularin phosphatase mtm1 to regulate mtm1 protein stability and possibly its intracellular location. By stabilizing mtm1 protein levels, required for skeletal muscle maintenance but not for myogenesis. In skeletal muscle cells, does not regulate mtm1 subcellular localization. In Danio rerio (Zebrafish), this protein is Myotubularin-related protein 12 (mtmr12).